Reading from the N-terminus, the 447-residue chain is 23S rRNA (uracil(1939)-C(5))-methyltransferase RlmD (447 aa).

In terms of domain architecture, TRAM spans 7–66 (RKPLSQEPQKASIEALTHEGRGIAHVAGKTVFIDGALPGETVWFHYLRRRGKFDEGRVLE). 4 residues coordinate [4Fe-4S] cluster: Cys-79, Cys-85, Cys-88, and Cys-168. 6 residues coordinate S-adenosyl-L-methionine: Gln-275, Phe-304, Asn-309, Glu-325, Asp-352, and Asp-374. The active-site Nucleophile is Cys-400.

This sequence belongs to the class I-like SAM-binding methyltransferase superfamily. RNA M5U methyltransferase family. RlmD subfamily.

The enzyme catalyses uridine(1939) in 23S rRNA + S-adenosyl-L-methionine = 5-methyluridine(1939) in 23S rRNA + S-adenosyl-L-homocysteine + H(+). In terms of biological role, catalyzes the formation of 5-methyl-uridine at position 1939 (m5U1939) in 23S rRNA. The polypeptide is 23S rRNA (uracil(1939)-C(5))-methyltransferase RlmD (Nitrosococcus oceani (strain ATCC 19707 / BCRC 17464 / JCM 30415 / NCIMB 11848 / C-107)).